Here is a 489-residue protein sequence, read N- to C-terminus: L-asparagine permease 1 (489 aa).

A run of 12 helical transmembrane segments spans residues 25–45 (QLQMIGIGGAIGTGLFLGAGG), 49–69 (KAGPGLFLVYGVCGVFVFLIL), 100–120 (AVGWMYFLHWAMTSIVDTTAI), 137–157 (ILALIALTVVLSMNLISVEWF), 162–182 (FWAALIKVLALMAFLVVGTVF), 210–230 (WLPLLIVTSGVVFAYSAVELV), 255–275 (IAIFYVGSVALLALLLPYTAY), 289–309 (IGFHGAGDLMNIVVLTAALSS), 344–364 (YGGIVLTAVITLFGVALNAFK), 369–389 (FEIVLNMSALGIIAGWATIVL), 413–433 (SPYSGYLTLLFLLVVLVTMAS), and 439–459 (TWTVATLIIVIPALTAGWYLV).

The protein belongs to the amino acid-polyamine-organocation (APC) superfamily. Amino acid transporter (AAT) (TC 2.A.3.1) family.

The protein resides in the cell membrane. The chain is L-asparagine permease 1 (ansP1) from Mycobacterium tuberculosis (strain CDC 1551 / Oshkosh).